Reading from the N-terminus, the 197-residue chain is Protein GrpE (197 aa).

Residues 1-39 are disordered; that stretch reads MSSKEQKTPEGQAPEEIIMDQHEEIEAVEPEASAEQVDP.

It belongs to the GrpE family. In terms of assembly, homodimer.

Its subcellular location is the cytoplasm. In terms of biological role, participates actively in the response to hyperosmotic and heat shock by preventing the aggregation of stress-denatured proteins, in association with DnaK and GrpE. It is the nucleotide exchange factor for DnaK and may function as a thermosensor. Unfolded proteins bind initially to DnaJ; upon interaction with the DnaJ-bound protein, DnaK hydrolyzes its bound ATP, resulting in the formation of a stable complex. GrpE releases ADP from DnaK; ATP binding to DnaK triggers the release of the substrate protein, thus completing the reaction cycle. Several rounds of ATP-dependent interactions between DnaJ, DnaK and GrpE are required for fully efficient folding. The polypeptide is Protein GrpE (Escherichia coli O127:H6 (strain E2348/69 / EPEC)).